The following is a 584-amino-acid chain: Sodium/calcium exchanger NCL1 (584 aa).

5 helical membrane-spanning segments follow: residues 77–97 (FLPC…YGFL), 120–140 (LVGG…LVLV), 154–174 (VLIG…LLWG), 215–235 (AARI…PKML), and 245–265 (VLLA…YQVF). 2 EF-hand domains span residues 305–340 (PNED…INFE) and 345–380 (DKND…WLNE). Ca(2+)-binding residues include Asp-318, Asp-320, Ser-322, Thr-324, Glu-329, Asp-358, Ser-360, Asn-362, and Glu-369. Transmembrane regions (helical) follow at residues 426-446 (WCIT…AAFA), 466-486 (FISF…SAII), 504-524 (YGGV…LIYI), 531-551 (FSSE…FTSF), and 561-581 (LVAY…DFVF).

The protein belongs to the Ca(2+):cation antiporter (CaCA) (TC 2.A.19) family.

The protein resides in the cell membrane. Functionally, may function as a sodium/calcium exchanger (NCX) and participate in the maintenance of calcium homeostasis. May play a role abiotic stress responses. The protein is Sodium/calcium exchanger NCL1 of Oryza sativa subsp. japonica (Rice).